Here is a 416-residue protein sequence, read N- to C-terminus: 2-aminoadipate transaminase (416 aa).

Residues 102–103 and Gln233 contribute to the pyridoxal 5'-phosphate site; that span reads GA. At Lys259 the chain carries N6-(pyridoxal phosphate)lysine. Thr288 provides a ligand contact to pyridoxal 5'-phosphate.

This sequence belongs to the class-III pyridoxal-phosphate-dependent aminotransferase family. The cofactor is pyridoxal 5'-phosphate.

The catalysed reaction is L-2-aminoadipate + 2-oxoglutarate = 2-oxoadipate + L-glutamate. The enzyme catalyses 5-aminopentanoate + 2-oxoglutarate = 5-oxopentanoate + L-glutamate. It functions in the pathway amino-acid degradation. Catalyzes the conversion of 2-aminoadipate (2AA) to 2-oxoadipate (2OA). Is most active on L-2-aminoadipate (L-2AA) and shows only weak activity on the enantiomer, D-2-aminoadipate (D-2AA). Shows moderate activity on 5-aminovalerate (5AVA) and weak activity toward 4-aminobutyrate (GABA). Is involved in a D-lysine catabolic pathway. This is 2-aminoadipate transaminase from Pseudomonas putida (strain ATCC 47054 / DSM 6125 / CFBP 8728 / NCIMB 11950 / KT2440).